Consider the following 172-residue polypeptide: 3-hydroxydecanoyl-[acyl-carrier-protein] dehydratase (172 aa).

Residue histidine 71 is part of the active site.

The protein belongs to the thioester dehydratase family. FabA subfamily. As to quaternary structure, homodimer.

The protein resides in the cytoplasm. The enzyme catalyses a (3R)-hydroxyacyl-[ACP] = a (2E)-enoyl-[ACP] + H2O. It catalyses the reaction (3R)-hydroxydecanoyl-[ACP] = (2E)-decenoyl-[ACP] + H2O. It carries out the reaction (2E)-decenoyl-[ACP] = (3Z)-decenoyl-[ACP]. It functions in the pathway lipid metabolism; fatty acid biosynthesis. Necessary for the introduction of cis unsaturation into fatty acids. Catalyzes the dehydration of (3R)-3-hydroxydecanoyl-ACP to E-(2)-decenoyl-ACP and then its isomerization to Z-(3)-decenoyl-ACP. Can catalyze the dehydratase reaction for beta-hydroxyacyl-ACPs with saturated chain lengths up to 16:0, being most active on intermediate chain length. This chain is 3-hydroxydecanoyl-[acyl-carrier-protein] dehydratase, found in Pectobacterium atrosepticum (strain SCRI 1043 / ATCC BAA-672) (Erwinia carotovora subsp. atroseptica).